We begin with the raw amino-acid sequence, 241 residues long: UPF0173 metal-dependent hydrolase Haur_4333 (241 aa).

This sequence belongs to the UPF0173 family.

This Herpetosiphon aurantiacus (strain ATCC 23779 / DSM 785 / 114-95) protein is UPF0173 metal-dependent hydrolase Haur_4333.